The sequence spans 132 residues: Small ribosomal subunit protein bS6 (132 aa).

Residues 96–132 are disordered; it reads HAEGPSIQMQKRDERERGDRGDRSDRGDRGDRGGFRR. Positions 105-132 are enriched in basic and acidic residues; that stretch reads QKRDERERGDRGDRSDRGDRGDRGGFRR.

The protein belongs to the bacterial ribosomal protein bS6 family.

Functionally, binds together with bS18 to 16S ribosomal RNA. The sequence is that of Small ribosomal subunit protein bS6 from Cereibacter sphaeroides (strain ATCC 17023 / DSM 158 / JCM 6121 / CCUG 31486 / LMG 2827 / NBRC 12203 / NCIMB 8253 / ATH 2.4.1.) (Rhodobacter sphaeroides).